Here is a 98-residue protein sequence, read N- to C-terminus: Large ribosomal subunit protein bL25 (98 aa).

This sequence belongs to the bacterial ribosomal protein bL25 family. Part of the 50S ribosomal subunit; part of the 5S rRNA/L5/L18/L25 subcomplex. Contacts the 5S rRNA. Binds to the 5S rRNA independently of L5 and L18.

This is one of the proteins that binds to the 5S RNA in the ribosome where it forms part of the central protuberance. This Synechocystis sp. (strain ATCC 27184 / PCC 6803 / Kazusa) protein is Large ribosomal subunit protein bL25.